We begin with the raw amino-acid sequence, 264 residues long: Zinc finger protein CG30 (264 aa).

The RING-type zinc finger occupies 8 to 63 (CNICFSVAEIKNYFLQPIDRLTIIPVLELDTCKHQLCSMCIRKIRKRKKVPCPLCR).

It is found in the host nucleus. Plays a role in the proper expression of late and very late genes. This is Zinc finger protein CG30 (CG30) from Autographa californica nuclear polyhedrosis virus (AcMNPV).